A 394-amino-acid polypeptide reads, in one-letter code: NAD(P)H-quinone oxidoreductase subunit H (394 aa).

Belongs to the complex I 49 kDa subunit family. In terms of assembly, NDH-1 can be composed of about 15 different subunits; different subcomplexes with different compositions have been identified which probably have different functions.

The protein localises to the cellular thylakoid membrane. The catalysed reaction is a plastoquinone + NADH + (n+1) H(+)(in) = a plastoquinol + NAD(+) + n H(+)(out). It catalyses the reaction a plastoquinone + NADPH + (n+1) H(+)(in) = a plastoquinol + NADP(+) + n H(+)(out). Its function is as follows. NDH-1 shuttles electrons from an unknown electron donor, via FMN and iron-sulfur (Fe-S) centers, to quinones in the respiratory and/or the photosynthetic chain. The immediate electron acceptor for the enzyme in this species is believed to be plastoquinone. Couples the redox reaction to proton translocation, and thus conserves the redox energy in a proton gradient. Cyanobacterial NDH-1 also plays a role in inorganic carbon-concentration. The sequence is that of NAD(P)H-quinone oxidoreductase subunit H from Nostoc punctiforme (strain ATCC 29133 / PCC 73102).